Here is a 168-residue protein sequence, read N- to C-terminus: Endoribonuclease YbeY (168 aa).

Positions 132, 136, and 142 each coordinate Zn(2+).

This sequence belongs to the endoribonuclease YbeY family. The cofactor is Zn(2+).

The protein resides in the cytoplasm. In terms of biological role, single strand-specific metallo-endoribonuclease involved in late-stage 70S ribosome quality control and in maturation of the 3' terminus of the 16S rRNA. The chain is Endoribonuclease YbeY from Clostridium perfringens (strain ATCC 13124 / DSM 756 / JCM 1290 / NCIMB 6125 / NCTC 8237 / Type A).